Reading from the N-terminus, the 177-residue chain is MRYSNKQTSNIHELQEKLITVNRVSKTVKGGRVFSFAALTVVGNVNGRVGFGYGKAREVPSAIQKAMEKARHNMIDIPLNPGRTLQHSIIGIYTGARIYMKPASEGTGIIAGGAMRAILEVVGIHNVLAKAYGSTNPINIVRATVNALKNMKSPEMVAEKRGKSLEYILNNYTYNGR.

Residues 14–77 (LQEKLITVNR…EKARHNMIDI (64 aa)) enclose the S5 DRBM domain.

The protein belongs to the universal ribosomal protein uS5 family. As to quaternary structure, part of the 30S ribosomal subunit. Contacts proteins S4 and S8.

With S4 and S12 plays an important role in translational accuracy. In terms of biological role, located at the back of the 30S subunit body where it stabilizes the conformation of the head with respect to the body. In Blochmanniella floridana, this protein is Small ribosomal subunit protein uS5.